The chain runs to 275 residues: 2,3,4,5-tetrahydropyridine-2,6-dicarboxylate N-succinyltransferase (275 aa).

Substrate contacts are provided by Arg104 and Asp141.

It belongs to the transferase hexapeptide repeat family. In terms of assembly, homotrimer.

The protein localises to the cytoplasm. The enzyme catalyses (S)-2,3,4,5-tetrahydrodipicolinate + succinyl-CoA + H2O = (S)-2-succinylamino-6-oxoheptanedioate + CoA. Its pathway is amino-acid biosynthesis; L-lysine biosynthesis via DAP pathway; LL-2,6-diaminopimelate from (S)-tetrahydrodipicolinate (succinylase route): step 1/3. This is 2,3,4,5-tetrahydropyridine-2,6-dicarboxylate N-succinyltransferase from Haemophilus influenzae (strain PittEE).